The sequence spans 224 residues: Heme response regulator HssR (224 aa).

Positions 3–116 (NCLIVDDDKK…ELLFRIKAVL (114 aa)) constitute a Response regulatory domain. Asp52 is subject to 4-aspartylphosphate. A DNA-binding region (ompR/PhoB-type) is located at residues 124-222 (DNELQLGNLI…VRGQGYRVDQ (99 aa)).

Phosphorylated by HssS.

Its subcellular location is the cytoplasm. Member of the two-component regulatory system HssS/HssR involved in intracellular heme homeostasis and tempering of staphylococcal virulence. Phosphorylated HssR binds to a direct repeat sequence within hrtAB promoter and activates the expression of hrtAB, an efflux pump, in response to extracellular heme, hemin, hemoglobin or blood. The protein is Heme response regulator HssR (hssR) of Staphylococcus epidermidis (strain ATCC 35984 / DSM 28319 / BCRC 17069 / CCUG 31568 / BM 3577 / RP62A).